A 320-amino-acid chain; its full sequence is Olfactory receptor 51E2 (320 aa).

The Extracellular portion of the chain corresponds to 1-27 (MSSCNFTHATFLLIGIPGLEEAHFWFG). A glycan (N-linked (GlcNAc...) asparagine) is linked at asparagine 5. A helical membrane pass occupies residues 28–48 (FPLLSMYAVALFGNCIVVFIV). The Cytoplasmic portion of the chain corresponds to 49–53 (RTERS). Residues 54–74 (LHAPMYLFLCMLAAIDLALST) traverse the membrane as a helical segment. At 75–98 (STMPKILALFWFDSREITFDACLA) the chain is on the extracellular side. Cysteine 96 and cysteine 178 are disulfide-bonded. Residues 99–119 (QMFFIHTLSAIESTILLAMAF) traverse the membrane as a helical segment. Residues 120–141 (DRYVAICHPLRHAAVLNNTVTV) are Cytoplasmic-facing. A helical membrane pass occupies residues 142–162 (QIGMVALVRGSLFFFPLPLLI). Residues 163 to 200 (KRLAFCHSNVLSHSYCVHQDVMKLAYTDTLPNVVYGLT) lie on the Extracellular side of the membrane. Residues 201–221 (AILLVMGVDVMFISLSYFLII) traverse the membrane as a helical segment. The Cytoplasmic segment spans residues 222-239 (RTVLQLPSKSERAKAFGT). The helical transmembrane segment at 240–260 (CVSHISVVLAFYVPLIGLSVV) threads the bilayer. The Extracellular segment spans residues 261 to 269 (HRFGNSLDP). A helical transmembrane segment spans residues 270–290 (IVHVLMGDVYLLLPPVINPII). Topologically, residues 291–320 (YGAKTKQIRTRVLAMFKISCDKDIEAGGNT) are cytoplasmic.

Belongs to the G-protein coupled receptor 1 family. In terms of tissue distribution, in brain, expressed in medulla oblongata by cells close to the fourth ventricle, in the area postrema, the nucleus tractus solitarius. Expressed in olfactory epithelium and vomeronasal organ. Expressed in kidney by large renal vessels, renal afferent arterioles, and extrarenal vascular beds. In small resistance vessels the expression is restricted to cells of the juxtaglomerular afferent arteriole, which mediate renin secretion. Also detected in small blood vessels in a variety of tissues including heart, diaphragm, skeletal muscle, and skin. In the heart, esophagus, and stomach it is detected in axons of autonomic neurons and neurons of the enteric plexus. Also detected in colon and liver. Expressed in the glomus cells of the carotid body.

It is found in the cell membrane. The protein localises to the early endosome membrane. In terms of biological role, olfactory receptor. The activity of this receptor is probably mediated by G-proteins which induce elevation of intracellular Ca(2+), cAMP and activation of phosphorylation of the protein kinases PKA and MAPK3/MAPK1. Activation of OR51E2 may affect melanocyte proliferation, differentiation, and melanogenesis and may increase proliferation and migration of primary retinal pigment epithelial (RPE) cells. Activated by the short chain fatty acids (SCFA), acetate and propionate. In response to SCFA, may positively regulate renin secretion and increase blood pressure. May also be activated by steroid hormones and regulate cell proliferation. Activated by L-lactate in glomus cells. This chain is Olfactory receptor 51E2 (Or51e2), found in Mus musculus (Mouse).